Reading from the N-terminus, the 203-residue chain is Protein S40-6 (203 aa).

The interval 1 to 33 (MAKGRKPTTMNRSDRYLGSYTYGDSHGNSVTDE) is disordered.

This sequence belongs to the senescence regulator S40 family.

Its subcellular location is the cytoplasm. The polypeptide is Protein S40-6 (Arabidopsis thaliana (Mouse-ear cress)).